The sequence spans 125 residues: Fluoride-specific ion channel FluC (125 aa).

A run of 4 helical transmembrane segments spans residues 2 to 22, 35 to 55, 68 to 88, and 98 to 118; these read WLSI…RTGF, LGTL…LAFF, LIIT…AEVV, and WALG…LLGI. Gly75 and Thr78 together coordinate Na(+).

It belongs to the fluoride channel Fluc/FEX (TC 1.A.43) family.

Its subcellular location is the cell inner membrane. It carries out the reaction fluoride(in) = fluoride(out). Na(+) is not transported, but it plays an essential structural role and its presence is essential for fluoride channel function. Fluoride-specific ion channel. Important for reducing fluoride concentration in the cell, thus reducing its toxicity. In Polynucleobacter asymbioticus (strain DSM 18221 / CIP 109841 / QLW-P1DMWA-1) (Polynucleobacter necessarius subsp. asymbioticus), this protein is Fluoride-specific ion channel FluC.